We begin with the raw amino-acid sequence, 550 residues long: DNA mismatch repair protein MutL (550 aa).

This sequence belongs to the DNA mismatch repair MutL/HexB family.

This protein is involved in the repair of mismatches in DNA. It is required for dam-dependent methyl-directed DNA mismatch repair. May act as a 'molecular matchmaker', a protein that promotes the formation of a stable complex between two or more DNA-binding proteins in an ATP-dependent manner without itself being part of a final effector complex. The sequence is that of DNA mismatch repair protein MutL from Microcystis aeruginosa (strain NIES-843 / IAM M-2473).